A 668-amino-acid chain; its full sequence is 1-deoxy-D-xylulose-5-phosphate synthase (668 aa).

Residues H105 and 146–148 (AHS) contribute to the thiamine diphosphate site. D177 lines the Mg(2+) pocket. Thiamine diphosphate contacts are provided by residues 178 to 179 (GA), N206, Y316, and E398. N206 is a binding site for Mg(2+).

It belongs to the transketolase family. DXPS subfamily. As to quaternary structure, homodimer. Mg(2+) is required as a cofactor. Thiamine diphosphate serves as cofactor.

The enzyme catalyses D-glyceraldehyde 3-phosphate + pyruvate + H(+) = 1-deoxy-D-xylulose 5-phosphate + CO2. It functions in the pathway metabolic intermediate biosynthesis; 1-deoxy-D-xylulose 5-phosphate biosynthesis; 1-deoxy-D-xylulose 5-phosphate from D-glyceraldehyde 3-phosphate and pyruvate: step 1/1. In terms of biological role, catalyzes the acyloin condensation reaction between C atoms 2 and 3 of pyruvate and glyceraldehyde 3-phosphate to yield 1-deoxy-D-xylulose-5-phosphate (DXP). The polypeptide is 1-deoxy-D-xylulose-5-phosphate synthase (Nitrobacter hamburgensis (strain DSM 10229 / NCIMB 13809 / X14)).